A 425-amino-acid polypeptide reads, in one-letter code: UDP-N-acetylglucosamine 1-carboxyvinyltransferase (425 aa).

A phosphoenolpyruvate-binding site is contributed by 31–32; it reads KN. R100 provides a ligand contact to UDP-N-acetyl-alpha-D-glucosamine. The active-site Proton donor is C124. C124 is modified (2-(S-cysteinyl)pyruvic acid O-phosphothioketal). Residues 129 to 133, 170 to 172, D311, and I333 each bind UDP-N-acetyl-alpha-D-glucosamine; these read RPIDQ and TVT.

This sequence belongs to the EPSP synthase family. MurA subfamily.

It is found in the cytoplasm. It catalyses the reaction phosphoenolpyruvate + UDP-N-acetyl-alpha-D-glucosamine = UDP-N-acetyl-3-O-(1-carboxyvinyl)-alpha-D-glucosamine + phosphate. It functions in the pathway cell wall biogenesis; peptidoglycan biosynthesis. Functionally, cell wall formation. Adds enolpyruvyl to UDP-N-acetylglucosamine. This Aquifex aeolicus (strain VF5) protein is UDP-N-acetylglucosamine 1-carboxyvinyltransferase.